The following is a 313-amino-acid chain: MSPENQSSVSEFLLLGLPIRPEQQAVFFTLFLGMYLTTVLGNLLIMLLIQLDSHLHTPMYFFLSHLALTDISFSSVTVPKMLMDMRTKYKSILYEECISQMYFFIFFTDLDSFLITSMAYDRYVAICHPLHYTVIMREELCVFLVAVSWILSCASSLSHTLLLTRLSFCAANTIPHVFCDLAALLKLSCSDIFLNELVMFTVGVVVITLPFMCILVSYGYIGATILRVPSTKGIHKALSTCGSHLSVVSLYYGSIFGQYLFPTVSSSIDKDVIVALMYTVVTPMLNPFIYSLRNRDMKEALGKLFSRATFFSW.

Residues 1 to 25 (MSPENQSSVSEFLLLGLPIRPEQQA) lie on the Extracellular side of the membrane. An N-linked (GlcNAc...) asparagine glycan is attached at asparagine 5. A helical transmembrane segment spans residues 26–49 (VFFTLFLGMYLTTVLGNLLIMLLI). Over 50-57 (QLDSHLHT) the chain is Cytoplasmic. A helical membrane pass occupies residues 58 to 79 (PMYFFLSHLALTDISFSSVTVP). At 80 to 100 (KMLMDMRTKYKSILYEECISQ) the chain is on the extracellular side. Cysteine 97 and cysteine 189 are joined by a disulfide. A helical membrane pass occupies residues 101 to 120 (MYFFIFFTDLDSFLITSMAY). Topologically, residues 121-139 (DRYVAICHPLHYTVIMREE) are cytoplasmic. A helical transmembrane segment spans residues 140 to 158 (LCVFLVAVSWILSCASSLS). The Extracellular portion of the chain corresponds to 159–196 (HTLLLTRLSFCAANTIPHVFCDLAALLKLSCSDIFLNE). A helical transmembrane segment spans residues 197–219 (LVMFTVGVVVITLPFMCILVSYG). The Cytoplasmic portion of the chain corresponds to 220-236 (YIGATILRVPSTKGIHK). Residues 237 to 259 (ALSTCGSHLSVVSLYYGSIFGQY) traverse the membrane as a helical segment. Over 260-272 (LFPTVSSSIDKDV) the chain is Extracellular. Residues 273–292 (IVALMYTVVTPMLNPFIYSL) form a helical membrane-spanning segment. Residues 293 to 313 (RNRDMKEALGKLFSRATFFSW) are Cytoplasmic-facing.

This sequence belongs to the G-protein coupled receptor 1 family.

It is found in the cell membrane. In terms of biological role, odorant receptor. The protein is Olfactory receptor 1J2 (OR1J2) of Homo sapiens (Human).